The chain runs to 141 residues: Nucleoside diphosphate kinase (141 aa).

ATP-binding residues include Lys-11, Phe-59, Arg-87, Thr-93, Arg-104, and Asn-114. The active-site Pros-phosphohistidine intermediate is His-117.

The protein belongs to the NDK family. In terms of assembly, homotetramer. Mg(2+) serves as cofactor.

The protein localises to the cytoplasm. It catalyses the reaction a 2'-deoxyribonucleoside 5'-diphosphate + ATP = a 2'-deoxyribonucleoside 5'-triphosphate + ADP. The enzyme catalyses a ribonucleoside 5'-diphosphate + ATP = a ribonucleoside 5'-triphosphate + ADP. Its function is as follows. Major role in the synthesis of nucleoside triphosphates other than ATP. The ATP gamma phosphate is transferred to the NDP beta phosphate via a ping-pong mechanism, using a phosphorylated active-site intermediate. The chain is Nucleoside diphosphate kinase from Leptothrix cholodnii (strain ATCC 51168 / LMG 8142 / SP-6) (Leptothrix discophora (strain SP-6)).